We begin with the raw amino-acid sequence, 350 residues long: Uroporphyrinogen decarboxylase (350 aa).

Substrate is bound by residues 28 to 32 (RQAGR), Phe47, Asp78, Tyr155, Ser210, and His325.

It belongs to the uroporphyrinogen decarboxylase family. In terms of assembly, homodimer.

It is found in the cytoplasm. The enzyme catalyses uroporphyrinogen III + 4 H(+) = coproporphyrinogen III + 4 CO2. It participates in porphyrin-containing compound metabolism; protoporphyrin-IX biosynthesis; coproporphyrinogen-III from 5-aminolevulinate: step 4/4. Its function is as follows. Catalyzes the decarboxylation of four acetate groups of uroporphyrinogen-III to yield coproporphyrinogen-III. The polypeptide is Uroporphyrinogen decarboxylase (Nostoc sp. (strain PCC 7120 / SAG 25.82 / UTEX 2576)).